The following is a 270-amino-acid chain: UPF0246 protein PsycPRwf_0637 (270 aa).

It belongs to the UPF0246 family.

This chain is UPF0246 protein PsycPRwf_0637, found in Psychrobacter sp. (strain PRwf-1).